Consider the following 905-residue polypeptide: A disintegrin and metalloproteinase with thrombospondin motifs 8 (905 aa).

A signal peptide spans 1–28 (MLRDPTTTGWPPLLLLLLQLPPPPLVCG). The propeptide occupies 29–228 (APAGPGTGAQ…PFGSKTRSKR (200 aa)). Disordered stretches follow at residues 139 to 163 (PQGA…RRED) and 186 to 225 (NGQG…SKTR). Residues 191 to 215 (ERSDNEEDRKQDKEGLLKETEDSRK) show a composition bias toward basic and acidic residues. The 211-residue stretch at 234-444 (RFVETLLVAD…GHGDCLLDAP (211 aa)) folds into the Peptidase M12B domain. 10 disulfide bridges follow: Cys309–Cys362, Cys338–Cys344, Cys356–Cys439, Cys394–Cys423, Cys478–Cys502, Cys487–Cys523, Cys517–Cys528, Cys554–Cys591, Cys558–Cys596, and Cys569–Cys581. His378 lines the Zn(2+) pocket. Residue Glu379 is part of the active site. Zn(2+) is bound by residues His382 and His388. Residues Asn415, Asn480, and Asn506 are each glycosylated (N-linked (GlcNAc...) asparagine). Residues 453–541 (GLPGHSTLYE…EDVENPKAVV (89 aa)) form the Disintegrin domain. Positions 542 to 597 (DGDWGPWRPWGQCSRTCGGGIQFSNRECDNPMPQNGGRFCLGERVKYQSCNTEECP) constitute a TSP type-1 1 domain. N-linked (GlcNAc...) asparagine glycosylation occurs at Asn615. The spacer stretch occupies residues 706-847 (RKISGSFTPF…RATTNIIQSL (142 aa)). The 57-residue stretch at 848-904 (PSAEWVLGDWSECPSTCRGSWQRRTVECRDPSGQASDTCDEALKPEDAKPCGSQPCP) folds into the TSP type-1 2 domain. The disordered stretch occupies residues 877–905 (DPSGQASDTCDEALKPEDAKPCGSQPCPL).

Zn(2+) serves as cofactor. The precursor is cleaved by a furin endopeptidase. Post-translationally, glycosylated. Can be O-fucosylated by POFUT2 on a serine or a threonine residue found within the consensus sequence C1-X(2)-(S/T)-C2-G of the TSP type-1 repeat domains where C1 and C2 are the first and second cysteine residue of the repeat, respectively. Fucosylated repeats can then be further glycosylated by the addition of a beta-1,3-glucose residue by the glucosyltransferase, B3GALTL. Fucosylation mediates the efficient secretion of ADAMTS family members. Can also be C-glycosylated with one or two mannose molecules on tryptophan residues within the consensus sequence W-X-X-W of the TPRs, and N-glycosylated. These other glycosylations can also facilitate secretion. As to expression, expressed specifically in adult lung and heart and low expression during mouse development.

The protein localises to the secreted. It localises to the extracellular space. Its subcellular location is the extracellular matrix. Functionally, has anti-angiogenic properties. This is A disintegrin and metalloproteinase with thrombospondin motifs 8 (Adamts8) from Mus musculus (Mouse).